Consider the following 183-residue polypeptide: Cell division protein ZapC (183 aa).

The protein belongs to the ZapC family. In terms of assembly, interacts directly with FtsZ.

It localises to the cytoplasm. Functionally, contributes to the efficiency of the cell division process by stabilizing the polymeric form of the cell division protein FtsZ. Acts by promoting interactions between FtsZ protofilaments and suppressing the GTPase activity of FtsZ. This Xenorhabdus bovienii (strain SS-2004) (Xenorhabdus nematophila subsp. bovienii) protein is Cell division protein ZapC.